A 453-amino-acid chain; its full sequence is 3-phosphoshikimate 1-carboxyvinyltransferase (453 aa).

Positions 1–27 are disordered; it reads MSHDSEPQPVTATPGGPLNGSLKPPGD. The 3-phosphoshikimate site is built by Lys28, Ser29, and Arg33. Position 28 (Lys28) interacts with phosphoenolpyruvate. Gly101 and Arg129 together coordinate phosphoenolpyruvate. 3-phosphoshikimate-binding residues include Ser175, Gln177, Asp330, and Lys357. Gln177 is a binding site for phosphoenolpyruvate. The Proton acceptor role is filled by Asp330. 2 residues coordinate phosphoenolpyruvate: Arg361 and Arg405.

The protein belongs to the EPSP synthase family. As to quaternary structure, monomer.

It is found in the cytoplasm. It carries out the reaction 3-phosphoshikimate + phosphoenolpyruvate = 5-O-(1-carboxyvinyl)-3-phosphoshikimate + phosphate. Its pathway is metabolic intermediate biosynthesis; chorismate biosynthesis; chorismate from D-erythrose 4-phosphate and phosphoenolpyruvate: step 6/7. Functionally, catalyzes the transfer of the enolpyruvyl moiety of phosphoenolpyruvate (PEP) to the 5-hydroxyl of shikimate-3-phosphate (S3P) to produce enolpyruvyl shikimate-3-phosphate and inorganic phosphate. This is 3-phosphoshikimate 1-carboxyvinyltransferase from Methylorubrum extorquens (strain CM4 / NCIMB 13688) (Methylobacterium extorquens).